We begin with the raw amino-acid sequence, 106 residues long: MEQFKHIDVQGAHALISRGEARLVDIRDPQSFAVAHAQSAFHLTNDSIVNFMQQVEFEQPVLVMCYHGISSQGAAQYLVNQGFEEVYSVDGGFEAWHRASLPVEAS.

A Rhodanese domain is found at serine 17–alanine 105. Residue cysteine 65 is the Cysteine persulfide intermediate of the active site.

It belongs to the GlpE family.

It is found in the cytoplasm. It carries out the reaction thiosulfate + hydrogen cyanide = thiocyanate + sulfite + 2 H(+). It catalyses the reaction thiosulfate + [thioredoxin]-dithiol = [thioredoxin]-disulfide + hydrogen sulfide + sulfite + 2 H(+). Its function is as follows. Transferase that catalyzes the transfer of sulfur from thiosulfate to thiophilic acceptors such as cyanide or dithiols. May function in a CysM-independent thiosulfate assimilation pathway by catalyzing the conversion of thiosulfate to sulfite, which can then be used for L-cysteine biosynthesis. The protein is Thiosulfate sulfurtransferase GlpE of Vibrio vulnificus (strain CMCP6).